A 659-amino-acid chain; its full sequence is Exocyst complex component 5 (659 aa).

Positions 1 to 58 (MRFEEEIGSLQMLCDQFQNKINTLEKQMNEEKKDYVQKLHRLHEKNGEAIDKMKQLDH) form a coiled coil.

It belongs to the SEC10 family. In terms of assembly, the exocyst complex is composed of sec-3/exoc1, sec-5/exoc2, sec-6/exoc3, sec-8/exoc4, sec-10/exoc5, sec-15/exoc6, exo-70/exoc7 and exo-84/exoc8.

Its function is as follows. Component of the exocyst complex involved in the docking of exocytic vesicles with fusion sites on the plasma membrane. This Caenorhabditis elegans protein is Exocyst complex component 5 (sec-10).